A 348-amino-acid polypeptide reads, in one-letter code: D-amino-acid oxidase (348 aa).

FAD is bound by residues Ala15, Ile18, Lys40, Ser52, Gly56, and Asn58. Residues Tyr232 and Arg295 each coordinate (R)-lactate. Residues Tyr232 and Arg295 each coordinate anthranilate. Arg295, Ser323, Gly326, Tyr327, and Gln328 together coordinate FAD.

Belongs to the DAMOX/DASOX family. FAD serves as cofactor.

It localises to the peroxisome. The enzyme catalyses a D-alpha-amino acid + O2 + H2O = a 2-oxocarboxylate + H2O2 + NH4(+). It catalyses the reaction D-serine + O2 + H2O = 3-hydroxypyruvate + H2O2 + NH4(+). It carries out the reaction D-alanine + O2 + H2O = pyruvate + H2O2 + NH4(+). The catalysed reaction is D-arginine + O2 + H2O = 5-guanidino-2-oxopentanoate + H2O2 + NH4(+). Catalyzes the oxidative deamination of D-amino acids with broad substrate specificity. Enables the organism to utilize D-amino acids as a source of nutrients. The polypeptide is D-amino-acid oxidase (Schizosaccharomyces pombe (strain 972 / ATCC 24843) (Fission yeast)).